A 276-amino-acid chain; its full sequence is DnaJ homolog subfamily C member 27-B (276 aa).

GTP contacts are provided by residues 23 to 30 (GNAEVGKS), 71 to 75 (DMAGH), and 137 to 140 (NKID). Residues 220–276 (DSWDMLGVKPGATRDEVNKAYRKLAVLLHPDKCVAPGSEDAFKAVVNARTALLKNIK) form the J domain.

This sequence belongs to the small GTPase superfamily. Rab family.

It is found in the nucleus. In terms of biological role, GTPase possibly involved in regulation of the MEK/ERK pathway. In Xenopus laevis (African clawed frog), this protein is DnaJ homolog subfamily C member 27-B (dnajc27-b).